The following is a 171-amino-acid chain: Sec-independent protein translocase protein TatB (171 aa).

Residues 2–22 (FDGIGFMELLLIGVLGLVVLG) form a helical membrane-spanning segment. Residues 69–171 (SKGLSNLSPE…DTRSNPKANG (103 aa)) form a disordered region. Residues 88 to 97 (QAAQSVNRPY) show a composition bias toward polar residues. Composition is skewed to low complexity over residues 114–130 (HSPV…HTSP) and 138–158 (PTAT…SEPS). A compositionally biased stretch (polar residues) spans 160-171 (GADTRSNPKANG).

It belongs to the TatB family. In terms of assembly, the Tat system comprises two distinct complexes: a TatABC complex, containing multiple copies of TatA, TatB and TatC subunits, and a separate TatA complex, containing only TatA subunits. Substrates initially bind to the TatABC complex, which probably triggers association of the separate TatA complex to form the active translocon.

The protein resides in the cell inner membrane. Functionally, part of the twin-arginine translocation (Tat) system that transports large folded proteins containing a characteristic twin-arginine motif in their signal peptide across membranes. Together with TatC, TatB is part of a receptor directly interacting with Tat signal peptides. TatB may form an oligomeric binding site that transiently accommodates folded Tat precursor proteins before their translocation. The polypeptide is Sec-independent protein translocase protein TatB (Shewanella baltica (strain OS185)).